Consider the following 202-residue polypeptide: Ribonuclease HII (202 aa).

The region spanning 11–200 is the RNase H type-2 domain; that stretch reads GLIAGVDEVG…VRKAIEEFNR (190 aa). A divalent metal cation is bound by residues D17, E18, and D109.

It belongs to the RNase HII family. The cofactor is Mn(2+). Mg(2+) is required as a cofactor.

The protein localises to the cytoplasm. The enzyme catalyses Endonucleolytic cleavage to 5'-phosphomonoester.. Functionally, endonuclease that specifically degrades the RNA of RNA-DNA hybrids. This Actinobacillus succinogenes (strain ATCC 55618 / DSM 22257 / CCUG 43843 / 130Z) protein is Ribonuclease HII.